We begin with the raw amino-acid sequence, 978 residues long: Macrophage colony-stimulating factor 1 receptor (978 aa).

An N-terminal signal peptide occupies residues 1-19 (MELGPPLVLLLATVWHGQG). At 20–515 (APVIEPSGPE…QLPDESLFTP (496 aa)) the chain is on the extracellular side. 5 Ig-like C2-type domains span residues 24-104 (EPSG…VKDP), 107-197 (SWNL…KVNR), 204-298 (QIKL…VVES), 299-397 (AYLN…LTLR), and 398-503 (YPPE…SLGQ). 3 disulfides stabilise this stretch: Cys42/Cys84, Cys127/Cys177, and Cys224/Cys278. 2 N-linked (GlcNAc...) asparagine glycosylation sites follow: Asn45 and Asn73. Asn302, Asn335, Asn389, Asn410, Asn449, Asn478, and Asn491 each carry an N-linked (GlcNAc...) asparagine glycan. A disulfide bridge connects residues Cys417 and Cys483. A helical transmembrane segment spans residues 516–536 (VVVACMSVMSLLVLLLLLLLY). Over 537–978 (KYKQKPKYQV…LQPNNYQFAC (442 aa)) the chain is Cytoplasmic. The interval 540–572 (QKPKYQVRWKIIERYEGNSYTFIDPTQLPYNEK) is regulatory juxtamembrane domain. Residues Tyr544 and Tyr559 each carry the phosphotyrosine; by autocatalysis modification. Residues 580–914 (LQFGKTLGAG…CFLLQEQARL (335 aa)) form the Protein kinase domain. ATP is bound by residues 586-594 (LGAGAFGKV) and Lys614. Phosphotyrosine; by autocatalysis occurs at positions 697 and 706. Ser711 is modified (phosphoserine). Tyr721 bears the Phosphotyrosine; by autocatalysis mark. Catalysis depends on Asp776, which acts as the Proton acceptor. Positions 794-816 (DFGLARDIMNDSNYVVKGNARLP) are activation loop. Residues Tyr807 and Tyr921 each carry the phosphotyrosine; by autocatalysis modification. The disordered stretch occupies residues 921–957 (YANLPSSGGSSGSDSGGGSSGGSSSEPEEESSSEHLA). Over residues 929-941 (GSSGSDSGGGSSG) the composition is skewed to gly residues. A Phosphotyrosine; by autocatalysis modification is found at Tyr974.

It belongs to the protein kinase superfamily. Tyr protein kinase family. CSF-1/PDGF receptor subfamily. As to quaternary structure, monomer. Homodimer. Interacts with CSF1 and IL34. Interaction with dimeric CSF1 or IL34 leads to receptor homodimerization. Interacts with INPPL1/SHIP2 and THOC5. Interacts (tyrosine phosphorylated) with PLCG2 (via SH2 domain). Interacts (tyrosine phosphorylated) with PIK3R1 (via SH2 domain). Interacts (tyrosine phosphorylated) with FYN, YES1 and SRC (via SH2 domain). Interacts (tyrosine phosphorylated) with CBL, GRB2 and SLA2. Post-translationally, autophosphorylated in response to CSF1 or IL34 binding. Phosphorylation at Tyr-559 is important for normal down-regulation of signaling by ubiquitination, internalization and degradation. Phosphorylation at Tyr-559 and Tyr-807 is important for interaction with SRC family members, including FYN, YES1 and SRC, and for subsequent activation of these protein kinases. Phosphorylation at Tyr-697 and Tyr-921 is important for interaction with GRB2. Phosphorylation at Tyr-721 is important for interaction with PIK3R1. Phosphorylation at Tyr-721 and Tyr-807 is important for interaction with PLCG2. Phosphorylation at Tyr-974 is important for interaction with CBL. Dephosphorylation by PTPN2 negatively regulates downstream signaling and macrophage differentiation. In terms of processing, ubiquitinated. Becomes rapidly polyubiquitinated after autophosphorylation, leading to its degradation.

The protein resides in the cell membrane. The catalysed reaction is L-tyrosyl-[protein] + ATP = O-phospho-L-tyrosyl-[protein] + ADP + H(+). Present in an inactive conformation in the absence of bound ligand. CSF1 or IL34 binding leads to dimerization and activation by autophosphorylation on tyrosine residues. Its function is as follows. Tyrosine-protein kinase that acts as a cell-surface receptor for CSF1 and IL34 and plays an essential role in the regulation of survival, proliferation and differentiation of hematopoietic precursor cells, especially mononuclear phagocytes, such as macrophages and monocytes. Promotes the release of pro-inflammatory chemokines in response to IL34 and CSF1, and thereby plays an important role in innate immunity and in inflammatory processes. Plays an important role in the regulation of osteoclast proliferation and differentiation, the regulation of bone resorption, and is required for normal bone and tooth development. Required for normal male and female fertility, and for normal development of milk ducts and acinar structures in the mammary gland during pregnancy. Promotes reorganization of the actin cytoskeleton, regulates formation of membrane ruffles, cell adhesion and cell migration, and promotes cancer cell invasion. Activates several signaling pathways in response to ligand binding, including the ERK1/2 and the JNK pathway. Phosphorylates PIK3R1, PLCG2, GRB2, SLA2 and CBL. Activation of PLCG2 leads to the production of the cellular signaling molecules diacylglycerol and inositol 1,4,5-trisphosphate, that then lead to the activation of protein kinase C family members, especially PRKCD. Phosphorylation of PIK3R1, the regulatory subunit of phosphatidylinositol 3-kinase, leads to activation of the AKT1 signaling pathway. Activated CSF1R also mediates activation of the MAP kinases MAPK1/ERK2 and/or MAPK3/ERK1, and of the SRC family kinases SRC, FYN and YES1. Activated CSF1R transmits signals both via proteins that directly interact with phosphorylated tyrosine residues in its intracellular domain, or via adapter proteins, such as GRB2. Promotes activation of STAT family members STAT3, STAT5A and/or STAT5B. Promotes tyrosine phosphorylation of SHC1 and INPP5D/SHIP-1. Receptor signaling is down-regulated by protein phosphatases, such as INPP5D/SHIP-1, that dephosphorylate the receptor and its downstream effectors, and by rapid internalization of the activated receptor. In the central nervous system, may play a role in the development of microglia macrophages. The chain is Macrophage colony-stimulating factor 1 receptor (Csf1r) from Rattus norvegicus (Rat).